The primary structure comprises 102 residues: Urease subunit beta (102 aa).

Belongs to the urease beta subunit family. Heterotrimer of UreA (gamma), UreB (beta) and UreC (alpha) subunits. Three heterotrimers associate to form the active enzyme.

It localises to the cytoplasm. It carries out the reaction urea + 2 H2O + H(+) = hydrogencarbonate + 2 NH4(+). Its pathway is nitrogen metabolism; urea degradation; CO(2) and NH(3) from urea (urease route): step 1/1. The protein is Urease subunit beta of Methylibium petroleiphilum (strain ATCC BAA-1232 / LMG 22953 / PM1).